Reading from the N-terminus, the 1134-residue chain is Protocadherin-18 (1134 aa).

The signal sequence occupies residues 1-27 (MYQMNAKMHFTFVFALLVVSFNLDVLG). 6 consecutive Cadherin domains span residues 28-137 (KNLK…SPQF), 138-246 (SRSL…SPAF), 247-354 (EQQS…KPEI), 361-465 (PGKE…PPHF), 466-576 (QRSR…VPVV), and 582-697 (RNNT…APLD). The Extracellular segment spans residues 28–699 (KNLKYRIYEE…SVSQAPLDVS (672 aa)). An N-linked (GlcNAc...) asparagine glycan is attached at Asn103. N-linked (GlcNAc...) asparagine glycosylation occurs at Asn269. N-linked (GlcNAc...) asparagine glycosylation is present at Asn559. The helical transmembrane segment at 700-720 (MIIIISLGAICAVLLVIMVLF) threads the bilayer. Topologically, residues 721-1134 (ATRCNREKKD…NKLLQDVRQS (414 aa)) are cytoplasmic. Disordered stretches follow at residues 768–800 (TLPI…NSHQ), 868–888 (SLKD…DLGR), and 941–1003 (DYRS…TSSL). Positions 791–800 (GSRQSHNSHQ) are enriched in polar residues. Basic and acidic residues predominate over residues 868–877 (SLKDSGRGDS). Residues 892–1134 (IDRLLGEGFS…NKLLQDVRQS (243 aa)) form an interaction with DAB1 region.

As to quaternary structure, interacts with DAB1.

It is found in the cell membrane. Potential calcium-dependent cell-adhesion protein. This is Protocadherin-18 (PCDH18) from Bos taurus (Bovine).